The sequence spans 595 residues: Beta-(1--&gt;2)glucan export ATP-binding/permease protein NdvA (595 aa).

The ABC transmembrane type-1 domain occupies 21–301 (SLLICAANVM…MSNFINLTVS (281 aa)). 5 consecutive transmembrane segments (helical) span residues 22–42 (LLIC…PILF), 55–75 (IILT…AYVL), 128–148 (AIWL…FILI), 152–172 (FNMN…YVLI), and 248–268 (TAST…VAKG). The region spanning 335 to 569 (VQFHHVTYKF…GGRFYKLLKA (235 aa)) is the ABC transporter domain. 368–375 (GPTGAGKT) serves as a coordination point for ATP.

This sequence belongs to the ABC transporter superfamily. Beta-(1--&gt;2)glucan exporter (TC 3.A.1.108.1) family. In terms of assembly, homodimer.

It localises to the cell inner membrane. The enzyme catalyses [(1-&gt;2)-beta-D-glucosyl](n)(in) + ATP + H2O = [(1-&gt;2)-beta-D-glucosyl](n)(out) + ADP + phosphate + H(+). Its function is as follows. Involved in beta-(1--&gt;2)glucan export. Transmembrane domains (TMD) form a pore in the inner membrane and the ATP-binding domain (NBD) is responsible for energy generation. The protein is Beta-(1--&gt;2)glucan export ATP-binding/permease protein NdvA of Bartonella quintana (strain Toulouse) (Rochalimaea quintana).